Reading from the N-terminus, the 292-residue chain is 4-hydroxy-tetrahydrodipicolinate synthase (292 aa).

T45 serves as a coordination point for pyruvate. Y133 acts as the Proton donor/acceptor in catalysis. Catalysis depends on K161, which acts as the Schiff-base intermediate with substrate. I203 contacts pyruvate.

The protein belongs to the DapA family. Homotetramer; dimer of dimers.

It is found in the cytoplasm. The catalysed reaction is L-aspartate 4-semialdehyde + pyruvate = (2S,4S)-4-hydroxy-2,3,4,5-tetrahydrodipicolinate + H2O + H(+). Its pathway is amino-acid biosynthesis; L-lysine biosynthesis via DAP pathway; (S)-tetrahydrodipicolinate from L-aspartate: step 3/4. Catalyzes the condensation of (S)-aspartate-beta-semialdehyde [(S)-ASA] and pyruvate to 4-hydroxy-tetrahydrodipicolinate (HTPA). The polypeptide is 4-hydroxy-tetrahydrodipicolinate synthase (Escherichia fergusonii (strain ATCC 35469 / DSM 13698 / CCUG 18766 / IAM 14443 / JCM 21226 / LMG 7866 / NBRC 102419 / NCTC 12128 / CDC 0568-73)).